The sequence spans 392 residues: 8-amino-7-oxononanoate synthase (392 aa).

Arg19 contacts substrate. 106–107 (GY) contributes to the pyridoxal 5'-phosphate binding site. His131 is a binding site for substrate. Positions 176, 204, and 233 each coordinate pyridoxal 5'-phosphate. Lys236 bears the N6-(pyridoxal phosphate)lysine mark. Thr350 is a binding site for substrate.

The protein belongs to the class-II pyridoxal-phosphate-dependent aminotransferase family. BioF subfamily. In terms of assembly, homodimer. Pyridoxal 5'-phosphate is required as a cofactor.

The enzyme catalyses 6-carboxyhexanoyl-[ACP] + L-alanine + H(+) = (8S)-8-amino-7-oxononanoate + holo-[ACP] + CO2. It functions in the pathway cofactor biosynthesis; biotin biosynthesis. Its function is as follows. Catalyzes the decarboxylative condensation of pimeloyl-[acyl-carrier protein] and L-alanine to produce 8-amino-7-oxononanoate (AON), [acyl-carrier protein], and carbon dioxide. This chain is 8-amino-7-oxononanoate synthase, found in Pseudomonas fluorescens (strain ATCC BAA-477 / NRRL B-23932 / Pf-5).